The primary structure comprises 98 residues: Citrate lyase acyl carrier protein (98 aa).

Position 14 is an O-(phosphoribosyl dephospho-coenzyme A)serine (S14).

The protein belongs to the CitD family. As to quaternary structure, oligomer with a subunit composition of (alpha,beta,gamma)6.

It is found in the cytoplasm. Its function is as follows. Covalent carrier of the coenzyme of citrate lyase. This chain is Citrate lyase acyl carrier protein, found in Shigella flexneri.